Here is a 500-residue protein sequence, read N- to C-terminus: Polyamine oxidase 1 (500 aa).

Residues 1 to 28 (MSSSPSFGLLAVAALLLALSLAQHGSLA) form the signal peptide. FAD-binding positions include 42–43 (MS), glutamate 63, arginine 71, and 87–88 (NW). A substrate-binding site is contributed by glutamate 90. Asparagine 105 is a glycosylation site (N-linked (GlcNAc...) asparagine). Glutamate 198 is a substrate binding site. 3 residues coordinate FAD: valine 265, tyrosine 427, and glutamate 458. Glycine 466 lines the substrate pocket. FAD is bound at residue 467 to 468 (YV). Cysteine 485 and cysteine 491 are joined by a disulfide.

The protein belongs to the flavin monoamine oxidase family. As to quaternary structure, monomer. The cofactor is FAD.

It localises to the secreted. It is found in the extracellular space. The protein resides in the apoplast. Its subcellular location is the cell wall. It carries out the reaction spermidine + O2 + H2O = 4-aminobutanal + propane-1,3-diamine + H2O2. The catalysed reaction is N(8)-acetylspermidine + O2 + H2O = 4-acetamidobutanal + propane-1,3-diamine + H2O2. It catalyses the reaction spermine + O2 + H2O = N-(3-aminopropyl)-4-aminobutanal + propane-1,3-diamine + H2O2. The enzyme catalyses N(1)-acetylspermine + O2 + H2O = N-(3-acetamidopropyl)-4-aminobutanal + propane-1,3-diamine + H2O2. The protein operates within amine and polyamine degradation; spermine degradation. Flavoenzyme involved in polyamine back-conversion. Catalyzes the oxidation of the secondary amino group of polyamines, such as spermine, spermidine and their acetyl derivatives. Plays an important role in the regulation of polyamine intracellular concentration. This Zea mays (Maize) protein is Polyamine oxidase 1.